Reading from the N-terminus, the 347-residue chain is Protein RecA (347 aa).

66–73 (GPESSGKT) serves as a coordination point for ATP.

The protein belongs to the RecA family.

It localises to the cytoplasm. Can catalyze the hydrolysis of ATP in the presence of single-stranded DNA, the ATP-dependent uptake of single-stranded DNA by duplex DNA, and the ATP-dependent hybridization of homologous single-stranded DNAs. It interacts with LexA causing its activation and leading to its autocatalytic cleavage. The sequence is that of Protein RecA from Burkholderia cepacia (Pseudomonas cepacia).